A 351-amino-acid polypeptide reads, in one-letter code: Ribosomal RNA small subunit methyltransferase H (351 aa).

Residues Gly48–Tyr50, Asp67, Phe94, Asp115, and Gln122 contribute to the S-adenosyl-L-methionine site. Residues Gly298–Arg351 form a disordered region.

It belongs to the methyltransferase superfamily. RsmH family.

It is found in the cytoplasm. The catalysed reaction is cytidine(1402) in 16S rRNA + S-adenosyl-L-methionine = N(4)-methylcytidine(1402) in 16S rRNA + S-adenosyl-L-homocysteine + H(+). Its function is as follows. Specifically methylates the N4 position of cytidine in position 1402 (C1402) of 16S rRNA. The chain is Ribosomal RNA small subunit methyltransferase H from Methylorubrum populi (strain ATCC BAA-705 / NCIMB 13946 / BJ001) (Methylobacterium populi).